A 208-amino-acid polypeptide reads, in one-letter code: Uracil phosphoribosyltransferase (208 aa).

5-phospho-alpha-D-ribose 1-diphosphate is bound by residues Arg78, Arg103, and 130–138 (DPMLATGGS). Residues Ile193 and 198–200 (GDA) each bind uracil. Asp199 lines the 5-phospho-alpha-D-ribose 1-diphosphate pocket.

Belongs to the UPRTase family. Mg(2+) is required as a cofactor.

The catalysed reaction is UMP + diphosphate = 5-phospho-alpha-D-ribose 1-diphosphate + uracil. It participates in pyrimidine metabolism; UMP biosynthesis via salvage pathway; UMP from uracil: step 1/1. With respect to regulation, allosterically activated by GTP. In terms of biological role, catalyzes the conversion of uracil and 5-phospho-alpha-D-ribose 1-diphosphate (PRPP) to UMP and diphosphate. The chain is Uracil phosphoribosyltransferase from Shewanella piezotolerans (strain WP3 / JCM 13877).